The chain runs to 438 residues: 26S proteasome regulatory subunit 6A (438 aa).

The tract at residues 1–24 is disordered; the sequence is MSTLEELDALDQSQQGGSSNNEGL. Residues 11 to 22 are compositionally biased toward polar residues; the sequence is DQSQQGGSSNNE. Residue 226–233 coordinates ATP; it reads GPPGTGKT.

This sequence belongs to the AAA ATPase family.

It localises to the cytoplasm. It is found in the nucleus. In terms of biological role, the 26S proteasome is involved in the ATP-dependent degradation of ubiquitinated proteins. The regulatory (or ATPase) complex confers ATP dependency and substrate specificity to the 26S complex. This chain is 26S proteasome regulatory subunit 6A (tbp1), found in Schizosaccharomyces pombe (strain 972 / ATCC 24843) (Fission yeast).